Reading from the N-terminus, the 123-residue chain is Phosphoribosyl-AMP cyclohydrolase (123 aa).

Residue D73 coordinates Mg(2+). C74 serves as a coordination point for Zn(2+). Mg(2+) contacts are provided by D75 and D77. Zn(2+) is bound by residues C90 and C97.

The protein belongs to the PRA-CH family. In terms of assembly, homodimer. The cofactor is Mg(2+). Zn(2+) is required as a cofactor.

The protein resides in the cytoplasm. The enzyme catalyses 1-(5-phospho-beta-D-ribosyl)-5'-AMP + H2O = 1-(5-phospho-beta-D-ribosyl)-5-[(5-phospho-beta-D-ribosylamino)methylideneamino]imidazole-4-carboxamide. It participates in amino-acid biosynthesis; L-histidine biosynthesis; L-histidine from 5-phospho-alpha-D-ribose 1-diphosphate: step 3/9. Catalyzes the hydrolysis of the adenine ring of phosphoribosyl-AMP. The chain is Phosphoribosyl-AMP cyclohydrolase from Methanoregula boonei (strain DSM 21154 / JCM 14090 / 6A8).